We begin with the raw amino-acid sequence, 158 residues long: Transcriptional repressor NrdR (158 aa).

Residues 3–34 (CPFCGSLDTQVIDSRANEAGDAIRRRRRCAAC) fold into a zinc finger. The region spanning 49 to 139 (PQIVKTNGTR…VYKSFKDPDD (91 aa)) is the ATP-cone domain.

It belongs to the NrdR family. Zn(2+) serves as cofactor.

In terms of biological role, negatively regulates transcription of bacterial ribonucleotide reductase nrd genes and operons by binding to NrdR-boxes. The chain is Transcriptional repressor NrdR from Thiobacillus denitrificans (strain ATCC 25259 / T1).